Consider the following 106-residue polypeptide: Urease subunit beta (106 aa).

The protein belongs to the urease beta subunit family. In terms of assembly, heterotrimer of UreA (gamma), UreB (beta) and UreC (alpha) subunits. Three heterotrimers associate to form the active enzyme.

It localises to the cytoplasm. The enzyme catalyses urea + 2 H2O + H(+) = hydrogencarbonate + 2 NH4(+). The protein operates within nitrogen metabolism; urea degradation; CO(2) and NH(3) from urea (urease route): step 1/1. In Parasynechococcus marenigrum (strain WH8102), this protein is Urease subunit beta.